A 1142-amino-acid polypeptide reads, in one-letter code: Auxin response factor 5 (1142 aa).

The segment at residues 148-250 is a DNA-binding region (TF-B3); it reads FCKTLTASDT…QLLLGIRRAN (103 aa). The PB1 domain maps to 1009 to 1093; the sequence is RTFTKVYKRG…RCIRILSPQE (85 aa). A disordered region spans residues 1114-1142; that stretch reads SSSDGVNGWRPRCDQNPGNPSIGPYDQFE.

This sequence belongs to the ARF family. Homodimers and heterodimers. Expressed in roots, culms, leaves and young panicles.

The protein resides in the nucleus. Auxin response factors (ARFs) are transcriptional factors that bind specifically to the DNA sequence 5'-TGTCTC-3' found in the auxin-responsive promoter elements (AuxREs). This is Auxin response factor 5 (ARF5) from Oryza sativa subsp. japonica (Rice).